We begin with the raw amino-acid sequence, 102 residues long: Large ribosomal subunit protein bL21 (102 aa).

This sequence belongs to the bacterial ribosomal protein bL21 family. Part of the 50S ribosomal subunit. Contacts protein L20.

Functionally, this protein binds to 23S rRNA in the presence of protein L20. The protein is Large ribosomal subunit protein bL21 of Sulfurimonas denitrificans (strain ATCC 33889 / DSM 1251) (Thiomicrospira denitrificans (strain ATCC 33889 / DSM 1251)).